Here is a 490-residue protein sequence, read N- to C-terminus: Protein Mdm4 (490 aa).

The 84-residue stretch at asparagine 25–threonine 108 folds into the SWIB/MDM2 domain. The tract at residues aspartate 129–threonine 160 is disordered. Residues isoleucine 130–serine 143 show a composition bias toward polar residues. Positions serine 246–serine 332 are region II. The RanBP2-type zinc finger occupies serine 300–aspartate 329. Serine 342 carries the post-translational modification Phosphoserine; by CHEK2. A Phosphoserine; by CHEK1 and CHEK2 modification is found at serine 367. Positions glutamate 393–alanine 490 are necessary for interaction with USP2. The RING-type zinc-finger motif lies at cysteine 437–lysine 478. The Nuclear localization signal signature appears at lysine 442–arginine 445.

Belongs to the MDM2/MDM4 family. As to quaternary structure, interacts with MDM2. Interacts with TP53, TP73 and USP2. Found in a trimeric complex with USP2, MDM2 and MDM4. Interacts (phosphorylated) with YWHAG; negatively regulates MDM4 activity toward TP53. In terms of processing, phosphorylated. Phosphorylation at Ser-367 promotes interaction with YWHAG and subsequent ubiquitination and degradation. Phosphorylation at Ser-342 also induces ubiquitination and degradation but to a lower extent. Ubiquitinated and degraded by MDM2. Deubiquitination by USP2 on the other hand stabilizes the MDM4 protein. In terms of tissue distribution, expressed in all tissues tested with high levels in thymus.

It is found in the nucleus. Functionally, along with MDM2, contributes to TP53 regulation. Inhibits p53/TP53- and TP73/p73-mediated cell cycle arrest and apoptosis by binding its transcriptional activation domain. Inhibits degradation of MDM2. Can reverse MDM2-targeted degradation of TP53 while maintaining suppression of TP53 transactivation and apoptotic functions. The chain is Protein Mdm4 (MDM4) from Homo sapiens (Human).